The chain runs to 619 residues: Dihydroxy-acid dehydratase (619 aa).

Residue Asp80 participates in Mg(2+) binding. Cys121 contributes to the [2Fe-2S] cluster binding site. Residues Asp122 and Lys123 each coordinate Mg(2+). An N6-carboxylysine modification is found at Lys123. Cys196 provides a ligand contact to [2Fe-2S] cluster. Glu492 lines the Mg(2+) pocket. Catalysis depends on Ser518, which acts as the Proton acceptor.

It belongs to the IlvD/Edd family. Homodimer. The cofactor is [2Fe-2S] cluster. It depends on Mg(2+) as a cofactor.

It carries out the reaction (2R)-2,3-dihydroxy-3-methylbutanoate = 3-methyl-2-oxobutanoate + H2O. The enzyme catalyses (2R,3R)-2,3-dihydroxy-3-methylpentanoate = (S)-3-methyl-2-oxopentanoate + H2O. It participates in amino-acid biosynthesis; L-isoleucine biosynthesis; L-isoleucine from 2-oxobutanoate: step 3/4. Its pathway is amino-acid biosynthesis; L-valine biosynthesis; L-valine from pyruvate: step 3/4. In terms of biological role, functions in the biosynthesis of branched-chain amino acids. Catalyzes the dehydration of (2R,3R)-2,3-dihydroxy-3-methylpentanoate (2,3-dihydroxy-3-methylvalerate) into 2-oxo-3-methylpentanoate (2-oxo-3-methylvalerate) and of (2R)-2,3-dihydroxy-3-methylbutanoate (2,3-dihydroxyisovalerate) into 2-oxo-3-methylbutanoate (2-oxoisovalerate), the penultimate precursor to L-isoleucine and L-valine, respectively. In Bifidobacterium adolescentis (strain ATCC 15703 / DSM 20083 / NCTC 11814 / E194a), this protein is Dihydroxy-acid dehydratase.